Reading from the N-terminus, the 484-residue chain is Malonate-semialdehyde dehydrogenase 3 (484 aa).

Residues Phe152, Lys176, Glu179, Arg180, and Ser229 each contribute to the NAD(+) site. The Nucleophile role is filled by Cys284. Glu384 contacts NAD(+).

It belongs to the aldehyde dehydrogenase family. IolA subfamily. As to quaternary structure, homotetramer.

The enzyme catalyses 3-oxopropanoate + NAD(+) + CoA + H2O = hydrogencarbonate + acetyl-CoA + NADH + H(+). It catalyses the reaction 2-methyl-3-oxopropanoate + NAD(+) + CoA + H2O = propanoyl-CoA + hydrogencarbonate + NADH + H(+). It participates in polyol metabolism; myo-inositol degradation into acetyl-CoA; acetyl-CoA from myo-inositol: step 7/7. Catalyzes the oxidation of malonate semialdehyde (MSA) and methylmalonate semialdehyde (MMSA) into acetyl-CoA and propanoyl-CoA, respectively. Is involved in a myo-inositol catabolic pathway. Bicarbonate, and not CO2, is the end-product of the enzymatic reaction. The chain is Malonate-semialdehyde dehydrogenase 3 from Geobacillus kaustophilus (strain HTA426).